Consider the following 64-residue polypeptide: Large ribosomal subunit protein bL35 (64 aa).

Belongs to the bacterial ribosomal protein bL35 family.

This is Large ribosomal subunit protein bL35 from Streptomyces coelicolor (strain ATCC BAA-471 / A3(2) / M145).